We begin with the raw amino-acid sequence, 156 residues long: 6,7-dimethyl-8-ribityllumazine synthase (156 aa).

Residues phenylalanine 22, 57-59, and 81-83 each bind 5-amino-6-(D-ribitylamino)uracil; these read AYE and TVI. Residue 86–87 participates in (2S)-2-hydroxy-3-oxobutyl phosphate binding; sequence GT. Histidine 89 functions as the Proton donor in the catalytic mechanism. Residue phenylalanine 114 coordinates 5-amino-6-(D-ribitylamino)uracil. Arginine 128 is a binding site for (2S)-2-hydroxy-3-oxobutyl phosphate.

It belongs to the DMRL synthase family. As to quaternary structure, forms an icosahedral capsid composed of 60 subunits, arranged as a dodecamer of pentamers.

It carries out the reaction (2S)-2-hydroxy-3-oxobutyl phosphate + 5-amino-6-(D-ribitylamino)uracil = 6,7-dimethyl-8-(1-D-ribityl)lumazine + phosphate + 2 H2O + H(+). The protein operates within cofactor biosynthesis; riboflavin biosynthesis; riboflavin from 2-hydroxy-3-oxobutyl phosphate and 5-amino-6-(D-ribitylamino)uracil: step 1/2. Catalyzes the formation of 6,7-dimethyl-8-ribityllumazine by condensation of 5-amino-6-(D-ribitylamino)uracil with 3,4-dihydroxy-2-butanone 4-phosphate. This is the penultimate step in the biosynthesis of riboflavin. This chain is 6,7-dimethyl-8-ribityllumazine synthase, found in Yersinia pseudotuberculosis serotype O:1b (strain IP 31758).